The primary structure comprises 95 residues: Large ribosomal subunit protein bL21 (95 aa).

The protein belongs to the bacterial ribosomal protein bL21 family. Part of the 50S ribosomal subunit. Contacts protein L20.

This protein binds to 23S rRNA in the presence of protein L20. This is Large ribosomal subunit protein bL21 from Rubrobacter xylanophilus (strain DSM 9941 / JCM 11954 / NBRC 16129 / PRD-1).